Here is a 221-residue protein sequence, read N- to C-terminus: Large ribosomal subunit protein uL3 (221 aa).

The protein belongs to the universal ribosomal protein uL3 family. In terms of assembly, part of the 50S ribosomal subunit. Forms a cluster with proteins L14 and L19.

Functionally, one of the primary rRNA binding proteins, it binds directly near the 3'-end of the 23S rRNA, where it nucleates assembly of the 50S subunit. The chain is Large ribosomal subunit protein uL3 from Chlamydia abortus (strain DSM 27085 / S26/3) (Chlamydophila abortus).